Here is a 511-residue protein sequence, read N- to C-terminus: 2,3-bisphosphoglycerate-independent phosphoglycerate mutase (511 aa).

Mn(2+) contacts are provided by Asp14 and Ser64. Ser64 acts as the Phosphoserine intermediate in catalysis. Substrate contacts are provided by residues His125, 155-156, Arg187, Arg193, 259-262, and Lys333; these read RD and RADR. Asp400, His404, Asp441, His442, and His460 together coordinate Mn(2+).

This sequence belongs to the BPG-independent phosphoglycerate mutase family. As to quaternary structure, monomer. It depends on Mn(2+) as a cofactor.

It carries out the reaction (2R)-2-phosphoglycerate = (2R)-3-phosphoglycerate. It participates in carbohydrate degradation; glycolysis; pyruvate from D-glyceraldehyde 3-phosphate: step 3/5. In terms of biological role, catalyzes the interconversion of 2-phosphoglycerate and 3-phosphoglycerate. The polypeptide is 2,3-bisphosphoglycerate-independent phosphoglycerate mutase (Pseudomonas putida (strain GB-1)).